The sequence spans 474 residues: 4-aminobutyrate aminotransferase (474 aa).

Over residues 1-13 (MSSTATVTESTHF) the composition is skewed to polar residues. Positions 1–31 (MSSTATVTESTHFFPNEPQGPSIKTETIPGP) are disordered. 142 to 143 (GS) serves as a coordination point for pyridoxal 5'-phosphate. Arg199 contributes to the substrate binding site. Lys333 is modified (N6-(pyridoxal phosphate)lysine). Pyridoxal 5'-phosphate is bound at residue Thr357.

This sequence belongs to the class-III pyridoxal-phosphate-dependent aminotransferase family. Homodimer. Requires pyridoxal 5'-phosphate as cofactor.

It localises to the cytoplasm. The enzyme catalyses 4-aminobutanoate + 2-oxoglutarate = succinate semialdehyde + L-glutamate. In terms of biological role, required for the degradation of gamma-aminobutyric acid (GABA), which is important for utilization of GABA as nitrogen source. Deaminates GABA to succinate-semialdehyde, which in turn is converted to succinate by the succinate semialdehyde dehydrogenase. Cannot transaminate beta-alanine (BAL). The chain is 4-aminobutyrate aminotransferase (uga1) from Schizosaccharomyces pombe (strain 972 / ATCC 24843) (Fission yeast).